The chain runs to 388 residues: UDP-N-acetylglucosamine--N-acetylmuramyl-(pentapeptide) pyrophosphoryl-undecaprenol N-acetylglucosamine transferase (388 aa).

Residues 42-44 (TGG), asparagine 159, arginine 195, serine 223, isoleucine 277, and glutamine 322 contribute to the UDP-N-acetyl-alpha-D-glucosamine site.

It belongs to the glycosyltransferase 28 family. MurG subfamily.

It localises to the cell inner membrane. It catalyses the reaction di-trans,octa-cis-undecaprenyl diphospho-N-acetyl-alpha-D-muramoyl-L-alanyl-D-glutamyl-meso-2,6-diaminopimeloyl-D-alanyl-D-alanine + UDP-N-acetyl-alpha-D-glucosamine = di-trans,octa-cis-undecaprenyl diphospho-[N-acetyl-alpha-D-glucosaminyl-(1-&gt;4)]-N-acetyl-alpha-D-muramoyl-L-alanyl-D-glutamyl-meso-2,6-diaminopimeloyl-D-alanyl-D-alanine + UDP + H(+). Its pathway is cell wall biogenesis; peptidoglycan biosynthesis. Its function is as follows. Cell wall formation. Catalyzes the transfer of a GlcNAc subunit on undecaprenyl-pyrophosphoryl-MurNAc-pentapeptide (lipid intermediate I) to form undecaprenyl-pyrophosphoryl-MurNAc-(pentapeptide)GlcNAc (lipid intermediate II). In Albidiferax ferrireducens (strain ATCC BAA-621 / DSM 15236 / T118) (Rhodoferax ferrireducens), this protein is UDP-N-acetylglucosamine--N-acetylmuramyl-(pentapeptide) pyrophosphoryl-undecaprenol N-acetylglucosamine transferase.